The chain runs to 342 residues: UDP-3-O-acylglucosamine N-acyltransferase (342 aa).

The Proton acceptor role is filled by H242.

It belongs to the transferase hexapeptide repeat family. LpxD subfamily. In terms of assembly, homotrimer.

The catalysed reaction is a UDP-3-O-[(3R)-3-hydroxyacyl]-alpha-D-glucosamine + a (3R)-hydroxyacyl-[ACP] = a UDP-2-N,3-O-bis[(3R)-3-hydroxyacyl]-alpha-D-glucosamine + holo-[ACP] + H(+). It participates in bacterial outer membrane biogenesis; LPS lipid A biosynthesis. Catalyzes the N-acylation of UDP-3-O-acylglucosamine using 3-hydroxyacyl-ACP as the acyl donor. Is involved in the biosynthesis of lipid A, a phosphorylated glycolipid that anchors the lipopolysaccharide to the outer membrane of the cell. In Leptothrix cholodnii (strain ATCC 51168 / LMG 8142 / SP-6) (Leptothrix discophora (strain SP-6)), this protein is UDP-3-O-acylglucosamine N-acyltransferase.